Consider the following 78-residue polypeptide: MSDIAERVKKIVAEHLGVEPEKVTENASFIDDLGADSLDTVELVMAFEEAFNTEIPDDAAETILTVGDAIKFLEKNAG.

Positions 2-77 (SDIAERVKKI…DAIKFLEKNA (76 aa)) constitute a Carrier domain. O-(pantetheine 4'-phosphoryl)serine is present on Ser-37.

It belongs to the acyl carrier protein (ACP) family. In terms of processing, 4'-phosphopantetheine is transferred from CoA to a specific serine of apo-ACP by AcpS. This modification is essential for activity because fatty acids are bound in thioester linkage to the sulfhydryl of the prosthetic group.

Its subcellular location is the cytoplasm. It participates in lipid metabolism; fatty acid biosynthesis. Functionally, carrier of the growing fatty acid chain in fatty acid biosynthesis. This is Acyl carrier protein from Azorhizobium caulinodans (strain ATCC 43989 / DSM 5975 / JCM 20966 / LMG 6465 / NBRC 14845 / NCIMB 13405 / ORS 571).